The chain runs to 360 residues: Ubiquitin carboxyl-terminal hydrolase MIY1 (360 aa).

The active-site Nucleophile is C28. H216 serves as the catalytic Proton acceptor. The interval 317 to 360 (KRKIHSHKKNSEIHAPVKKDKFKRRSSLLNAKASEKEKSECVVM) is disordered. Composition is skewed to basic and acidic residues over residues 325–335 (KNSEIHAPVKK) and 349–360 (ASEKEKSECVVM).

It belongs to the MINDY deubiquitinase family. FAM63 subfamily.

Its subcellular location is the cytoplasm. The catalysed reaction is Thiol-dependent hydrolysis of ester, thioester, amide, peptide and isopeptide bonds formed by the C-terminal Gly of ubiquitin (a 76-residue protein attached to proteins as an intracellular targeting signal).. In terms of biological role, hydrolase that can specifically remove 'Lys-48'-linked conjugated ubiquitin from proteins. Has endodeubiquitinase activity. The chain is Ubiquitin carboxyl-terminal hydrolase MIY1 from Saccharomyces cerevisiae (strain ATCC 204508 / S288c) (Baker's yeast).